Here is a 230-residue protein sequence, read N- to C-terminus: Probable fimbrial chaperone SfmC (230 aa).

An N-terminal signal peptide occupies residues 1-23; it reads MMTKIKLLMLIIFYLIISASAHA.

The protein belongs to the periplasmic pilus chaperone family.

The protein resides in the periplasm. Its function is as follows. Part of the sfmACDHF fimbrial operon. Could contribute to adhesion to various surfaces in specific environmental niches. Increases adhesion to eukaryotic T24 bladder epithelial cells in the absence of fim genes. The polypeptide is Probable fimbrial chaperone SfmC (sfmC) (Escherichia coli (strain K12)).